A 517-amino-acid polypeptide reads, in one-letter code: Putative thymidine phosphorylase (517 aa).

The protein belongs to the thymidine/pyrimidine-nucleoside phosphorylase family. Type 2 subfamily.

The enzyme catalyses thymidine + phosphate = 2-deoxy-alpha-D-ribose 1-phosphate + thymine. The sequence is that of Putative thymidine phosphorylase from Legionella pneumophila (strain Paris).